Here is a 379-residue protein sequence, read N- to C-terminus: ATPase ASNA1 homolog (379 aa).

A disordered region spans residues M1–Y20. Low complexity predominate over residues N7–D18. ATP is bound at residue K46–T53. The active site involves D75. E246 and N273 together coordinate ATP.

It belongs to the arsA ATPase family. In terms of assembly, homodimer.

It localises to the cytoplasm. The protein localises to the endoplasmic reticulum. Functionally, ATPase required for the post-translational delivery of tail-anchored (TA) proteins to the endoplasmic reticulum. Recognizes and selectively binds the transmembrane domain of TA proteins in the cytosol. This complex then targets to the endoplasmic reticulum by membrane-bound receptors, where the tail-anchored protein is released for insertion. This process is regulated by ATP binding and hydrolysis. ATP binding drives the homodimer towards the closed dimer state, facilitating recognition of newly synthesized TA membrane proteins. ATP hydrolysis is required for insertion. Subsequently, the homodimer reverts towards the open dimer state, lowering its affinity for the membrane-bound receptor, and returning it to the cytosol to initiate a new round of targeting. In Plasmodium falciparum (isolate 3D7), this protein is ATPase ASNA1 homolog.